A 403-amino-acid polypeptide reads, in one-letter code: Aminomethyltransferase, mitochondrial (403 aa).

Residues M1–C28 constitute a mitochondrion transit peptide. The substrate site is built by E232, R261, and Y399.

This sequence belongs to the GcvT family. In terms of assembly, the glycine cleavage system is composed of four proteins: P, T, L and H.

The protein localises to the mitochondrion. It catalyses the reaction N(6)-[(R)-S(8)-aminomethyldihydrolipoyl]-L-lysyl-[protein] + (6S)-5,6,7,8-tetrahydrofolate = N(6)-[(R)-dihydrolipoyl]-L-lysyl-[protein] + (6R)-5,10-methylene-5,6,7,8-tetrahydrofolate + NH4(+). In terms of biological role, the glycine cleavage system catalyzes the degradation of glycine. The sequence is that of Aminomethyltransferase, mitochondrial from Homo sapiens (Human).